The chain runs to 77 residues: UPF0349 protein lmo2392 (77 aa).

It belongs to the UPF0349 family.

This chain is UPF0349 protein lmo2392, found in Listeria monocytogenes serovar 1/2a (strain ATCC BAA-679 / EGD-e).